Reading from the N-terminus, the 826-residue chain is U4/U6 snRNA-associated-splicing factor PRP24 (826 aa).

4 consecutive RRM domains span residues 310 to 385 (TSVF…EAAG), 386 to 463 (ITLY…YSDP), 477 to 554 (REVH…LSVS), and 598 to 670 (RSFA…AVPQ).

Its subcellular location is the nucleus. In terms of biological role, functions as a recycling factor of the spliceosome, a machinery that forms on each precursor-messenger RNA (pre-mRNA) and catalyzes the removal of introns. Chaperones the re-annealing of U4 and U6 snRNAs (small nuclear RNAs) released from previous rounds of splicing, an initial step in reforming the U4/U6-U5 tri-snRNP (small nuclear ribonucleoprotein) that can reassemble into another spliceosome complex; this step involves binding U6 and facilitating the unwinding of the U6 internal stem loop, followed by base-pairing of U6 to U4. The protein is U4/U6 snRNA-associated-splicing factor PRP24 of Ophiostoma ulmi (Dutch elm disease fungus).